The chain runs to 223 residues: Translation initiation factor 6 (223 aa).

The protein belongs to the eIF-6 family.

In terms of biological role, binds to the 50S ribosomal subunit and prevents its association with the 30S ribosomal subunit to form the 70S initiation complex. In Methanobrevibacter smithii (strain ATCC 35061 / DSM 861 / OCM 144 / PS), this protein is Translation initiation factor 6.